The sequence spans 473 residues: ATP synthase subunit beta (473 aa).

Gly158–Thr165 contacts ATP.

It belongs to the ATPase alpha/beta chains family. In terms of assembly, F-type ATPases have 2 components, CF(1) - the catalytic core - and CF(0) - the membrane proton channel. CF(1) has five subunits: alpha(3), beta(3), gamma(1), delta(1), epsilon(1). CF(0) has three main subunits: a(1), b(2) and c(9-12). The alpha and beta chains form an alternating ring which encloses part of the gamma chain. CF(1) is attached to CF(0) by a central stalk formed by the gamma and epsilon chains, while a peripheral stalk is formed by the delta and b chains. The F(1)F(0) complex interacts with SpoIIIJ and YqjG; YqgA is found in the same complex.

It is found in the cell membrane. It localises to the membrane raft. It carries out the reaction ATP + H2O + 4 H(+)(in) = ADP + phosphate + 5 H(+)(out). In terms of biological role, produces ATP from ADP in the presence of a proton gradient across the membrane. The catalytic sites are hosted primarily by the beta subunits. The polypeptide is ATP synthase subunit beta (Bacillus subtilis (strain 168)).